The chain runs to 196 residues: ATP-dependent Clp protease proteolytic subunit (196 aa).

Residue S101 is the Nucleophile of the active site. H126 is a catalytic residue.

Belongs to the peptidase S14 family. Component of the chloroplastic Clp protease core complex.

The protein localises to the plastid. The protein resides in the chloroplast stroma. It carries out the reaction Hydrolysis of proteins to small peptides in the presence of ATP and magnesium. alpha-casein is the usual test substrate. In the absence of ATP, only oligopeptides shorter than five residues are hydrolyzed (such as succinyl-Leu-Tyr-|-NHMec, and Leu-Tyr-Leu-|-Tyr-Trp, in which cleavage of the -Tyr-|-Leu- and -Tyr-|-Trp bonds also occurs).. In terms of biological role, cleaves peptides in various proteins in a process that requires ATP hydrolysis. Has a chymotrypsin-like activity. Plays a major role in the degradation of misfolded proteins. This chain is ATP-dependent Clp protease proteolytic subunit, found in Spinacia oleracea (Spinach).